Reading from the N-terminus, the 151-residue chain is MKCPYCAYGESKVVDSRSTEDGSSIRRRRECLKCNRRYTTYEKIETTPILVIKKNMSREYFDRNKIVNGLMKACQKRPVSRKQIEQIANEVERHISNEMLTEVNTDKIGQIIMKNLKKIDEVSYVRFASVYRQFKDINTFMEEIKNLMDKN.

A zinc finger spans residues 3–34 (CPYCAYGESKVVDSRSTEDGSSIRRRRECLKC). The 91-residue stretch at 49–139 (ILVIKKNMSR…VYRQFKDINT (91 aa)) folds into the ATP-cone domain.

Belongs to the NrdR family. Zn(2+) is required as a cofactor.

Its function is as follows. Negatively regulates transcription of bacterial ribonucleotide reductase nrd genes and operons by binding to NrdR-boxes. This chain is Transcriptional repressor NrdR, found in Clostridium botulinum (strain ATCC 19397 / Type A).